Here is a 309-residue protein sequence, read N- to C-terminus: Neuropeptide-like 1 (309 aa).

An N-terminal signal peptide occupies residues 1 to 28 (MQAVLQSAHSSRRLMLLLSMLLNAAIQP). Positions 29–99 (RSIIVSATDD…GEYPDYLEED (71 aa)) are excised as a propeptide. The interval 126 to 147 (GQLPTAEPGEDYGDADSGEPSE) is disordered. Residues 133 to 144 (PGEDYGDADSGE) are compositionally biased toward acidic residues. The residue at position 164 (Tyr164) is a Tyrosine amide. An Asparagine amide modification is found at Asn182.

MTYamide peptide: Expressed in the larval CNS (at protein level). NAP peptide: Expressed in the larval CNS (at protein level). IPNamide peptide: Expressed in the ventral ganglion of the third larval instar and adult brain (at protein level).

It localises to the secreted. Functionally, acts as a ligand for the receptor-type guanylate cyclase Gyc76C. Stimulates Gyc76c-dependent cGMP production and modulates the IMD innate immune pathway in response to salt stress by inducing nuclear translocation of NF-kappa-B protein Rel which leads to increased expression of the antimicrobial peptide diptericin. Does not appear to play a role in Gyc76C-mediated wing development. In Drosophila melanogaster (Fruit fly), this protein is Neuropeptide-like 1 (Nplp1).